Reading from the N-terminus, the 218-residue chain is MDIQLFQGYGGKVIVAVDYGERKCGVAFGEILPQKSLVIPTKNLKEFIRKLKPDKIIFGLPLSMSGKYTQQTFKTVAVAFKFSKEYETYLCDERLTTKIGERISKRDDAVSAALIFQSFFENSSVCEKVTDPRKKVDLALEKVDGEVLLYEFPDPSLNIEAREVDVVTKNPVLAYFYSKNGYFVGRELWEKKYDLIISGKNCEELKKYLKENGRLVCL.

The protein belongs to the YqgF nuclease family.

Its subcellular location is the cytoplasm. Its function is as follows. Could be a nuclease involved in processing of the 5'-end of pre-16S rRNA. The sequence is that of Putative pre-16S rRNA nuclease from Thermotoga maritima (strain ATCC 43589 / DSM 3109 / JCM 10099 / NBRC 100826 / MSB8).